The sequence spans 430 residues: Protein IQ-DOMAIN 3 (430 aa).

Residues 1-36 (MGKSWFSAVKKALSPEPKQKKEQKPHKSKKWFGKSK) form a disordered region. The Nuclear localization signal 1 signature appears at 9-16 (VKKALSPE). Positions 23-35 (QKPHKSKKWFGKS) are enriched in basic residues. The region spanning 107-135 (EEIAAIKIQTAFRGYMARRALRALRGLVR) is the IQ domain. The stretch at 170 to 224 (RLRLSEDKQALTRQLQQKHNKDFDKTGENWNDSTLSREKVEANMLNKQVATMRRE) forms a coiled coil. Residues 213–231 (MLNKQVATMRREKALAYAF) form a calmodulin-binding region. Disordered stretches follow at residues 271 to 368 (ENHS…SQSV) and 385 to 430 (SNLS…TNLA). The segment covering 286 to 295 (ARSVASRAMS) has biased composition (low complexity). Over residues 326–340 (SEDSNSIVSFQSEQP) the composition is skewed to polar residues. The Nuclear localization signal 2 motif lies at 396-403 (AKKRLSFS).

Belongs to the IQD family. Binds to multiple calmodulin (CaM) in the presence of Ca(2+) and CaM-like proteins.

It is found in the nucleus. The protein resides in the nucleolus. The protein localises to the cytoplasm. It localises to the cytoskeleton. Functionally, may be involved in cooperative interactions with calmodulins or calmodulin-like proteins. Recruits calmodulin proteins to microtubules, thus being a potential scaffold in cellular signaling and trafficking. May associate with nucleic acids and regulate gene expression at the transcriptional or post-transcriptional level. The protein is Protein IQ-DOMAIN 3 of Arabidopsis thaliana (Mouse-ear cress).